Here is a 333-residue protein sequence, read N- to C-terminus: MAFADRLLAAWYAGHPALALLRPLEALYRRVVTRKRARFLRGDSASYRAPVPVIVVGNITVGGTGKTPMILWLIEHCRQQGLKVGVVSRGYGARPPRLPWRVQADQPADEAGDEPLLIVQRTGVPLMIDPDRARAVQALLASEPLDLILCDDGMQHYRLARDLELVLIDAARGLGNGRCLPAGPLREPADRLREADAVLFNGASEDRTEGFGFRLQPSALVNVRTGERRALDHFPAGQRLHAVAGIGNPQRFFNTLLGLNWQPVPHPFADHAQFSARSLAFSPPLPLVMTEKDAVKCRAFAADDWWYLAVEAQPTPAFSAWFDNQLQRLLRKP.

Position 60 to 67 (T60 to T67) interacts with ATP.

It belongs to the LpxK family.

It catalyses the reaction a lipid A disaccharide + ATP = a lipid IVA + ADP + H(+). It participates in glycolipid biosynthesis; lipid IV(A) biosynthesis; lipid IV(A) from (3R)-3-hydroxytetradecanoyl-[acyl-carrier-protein] and UDP-N-acetyl-alpha-D-glucosamine: step 6/6. Its function is as follows. Transfers the gamma-phosphate of ATP to the 4'-position of a tetraacyldisaccharide 1-phosphate intermediate (termed DS-1-P) to form tetraacyldisaccharide 1,4'-bis-phosphate (lipid IVA). The polypeptide is Tetraacyldisaccharide 4'-kinase (Pseudomonas putida (strain ATCC 700007 / DSM 6899 / JCM 31910 / BCRC 17059 / LMG 24140 / F1)).